Here is a 657-residue protein sequence, read N- to C-terminus: Zinc transporter ZIP4 (657 aa).

The N-terminal stretch at 1-22 (MMLPKSLTQGLLLAMLVGTAAM) is a signal peptide. Residues 23-335 (VQPYHLLSLL…QDQLSQAERY (313 aa)) lie on the Extracellular side of the membrane. Residues Asn193, Asn220, and Asn268 are each glycosylated (N-linked (GlcNAc...) asparagine). A helical membrane pass occupies residues 336–356 (LYGSLATLLICLCAVFGLLLL). The Cytoplasmic portion of the chain corresponds to 357-374 (TCAKCSTATHYIMQTFLS). The chain crosses the membrane as a helical span at residues 375–395 (LAVGALTGDALLHLIPKVLGL). The Extracellular segment spans residues 396-417 (HTHSGEVHSHEEESIGGQSTWR). A helical transmembrane segment spans residues 418-438 (LLAVLGGFYIFFLFESFFNLL). At 439-508 (LPRDQDHEKD…LRAELRMLPY (70 aa)) the chain is on the cytoplasmic side. Positions 462 to 464 (LQL) match the Essential for SLC39A4 endocytosis motif. Residues 467–491 (SNLRQSKQPHESSRSDLVTEETPEL) are disordered. A helical membrane pass occupies residues 509 to 528 (LITLGDAVHNFADGLAVGAA). Residues His517, Asn518, and Asp521 each contribute to the Zn(2+) site. The Extracellular portion of the chain corresponds to 529–536 (FSSTWKTG). A helical membrane pass occupies residues 537–563 (LATSLAVFCHELPHELGDFAALLHAGL). His546, Glu547, and His550 together coordinate Zn(2+). Residues 564–568 (TVKRA) are Cytoplasmic-facing. The chain crosses the membrane as a helical span at residues 569–589 (LLLNLASALTAFAGLYVALAV). Residues 590–597 (GVGEEGET) lie on the Extracellular side of the membrane. A helical transmembrane segment spans residues 598–618 (WILAVATGLFLYVALCDMLPA). Over 619 to 627 (MMNVRDQRP) the chain is Cytoplasmic. Residues 628–648 (WLLFLLHNVGLLGGWTILLLL) form a helical membrane-spanning segment. Topologically, residues 649–657 (SLYEDSITF) are extracellular.

It belongs to the ZIP transporter (TC 2.A.5) family. As to quaternary structure, homodimer; homodimerization is mediated by the transmembrane domain. The extracellular N-terminal ectodomain is cleaved when cells are Zn(2+) deficient, N-terminally cleaved SLC39A4 is internalized at a faster rate. In terms of processing, under excess Zn(2+) conditions, SLC39A4 on the cell surface is rapidly endocytosed, ubiquitinated and degraded. Post-translationally, glycosylated. Expressed in duodenum, jejunum, and ileum.

The protein localises to the cell membrane. It is found in the recycling endosome membrane. It localises to the apical cell membrane. It carries out the reaction Zn(2+)(in) = Zn(2+)(out). Its function is as follows. Selective transporter that mediates the uptake of Zn(2+). Plays an essential role for dietary zinc uptake from small intestine. The Zn(2+) uniporter activity is regulated by zinc availability. Also exhibits polyspecific binding and transport of Cu(2+), Cd(2+) and possibly Ni(2+) but at higher concentrations. This chain is Zinc transporter ZIP4 (Slc39a4), found in Rattus norvegicus (Rat).